The primary structure comprises 376 residues: Queuine tRNA-ribosyltransferase (376 aa).

The active-site Proton acceptor is aspartate 90. Residues 90-94 (DSGGF), aspartate 144, glutamine 193, and glycine 220 each bind substrate. The interval 251–257 (GVGTPED) is RNA binding. Catalysis depends on aspartate 270, which acts as the Nucleophile. Residues 275–279 (TRNAR) are RNA binding; important for wobble base 34 recognition. Zn(2+) contacts are provided by cysteine 308, cysteine 310, cysteine 313, and histidine 339.

Belongs to the queuine tRNA-ribosyltransferase family. In terms of assembly, homodimer. Within each dimer, one monomer is responsible for RNA recognition and catalysis, while the other monomer binds to the replacement base PreQ1. Requires Zn(2+) as cofactor.

It carries out the reaction 7-aminomethyl-7-carbaguanine + guanosine(34) in tRNA = 7-aminomethyl-7-carbaguanosine(34) in tRNA + guanine. Its pathway is tRNA modification; tRNA-queuosine biosynthesis. Functionally, catalyzes the base-exchange of a guanine (G) residue with the queuine precursor 7-aminomethyl-7-deazaguanine (PreQ1) at position 34 (anticodon wobble position) in tRNAs with GU(N) anticodons (tRNA-Asp, -Asn, -His and -Tyr). Catalysis occurs through a double-displacement mechanism. The nucleophile active site attacks the C1' of nucleotide 34 to detach the guanine base from the RNA, forming a covalent enzyme-RNA intermediate. The proton acceptor active site deprotonates the incoming PreQ1, allowing a nucleophilic attack on the C1' of the ribose to form the product. After dissociation, two additional enzymatic reactions on the tRNA convert PreQ1 to queuine (Q), resulting in the hypermodified nucleoside queuosine (7-(((4,5-cis-dihydroxy-2-cyclopenten-1-yl)amino)methyl)-7-deazaguanosine). The protein is Queuine tRNA-ribosyltransferase of Cupriavidus taiwanensis (strain DSM 17343 / BCRC 17206 / CCUG 44338 / CIP 107171 / LMG 19424 / R1) (Ralstonia taiwanensis (strain LMG 19424)).